Reading from the N-terminus, the 260-residue chain is Thiazole synthase (260 aa).

The Schiff-base intermediate with DXP role is filled by K102. 1-deoxy-D-xylulose 5-phosphate-binding positions include G163, 189-190 (AG), and 211-212 (NT).

Belongs to the ThiG family. As to quaternary structure, homotetramer. Forms heterodimers with either ThiH or ThiS.

Its subcellular location is the cytoplasm. It carries out the reaction [ThiS sulfur-carrier protein]-C-terminal-Gly-aminoethanethioate + 2-iminoacetate + 1-deoxy-D-xylulose 5-phosphate = [ThiS sulfur-carrier protein]-C-terminal Gly-Gly + 2-[(2R,5Z)-2-carboxy-4-methylthiazol-5(2H)-ylidene]ethyl phosphate + 2 H2O + H(+). It functions in the pathway cofactor biosynthesis; thiamine diphosphate biosynthesis. Catalyzes the rearrangement of 1-deoxy-D-xylulose 5-phosphate (DXP) to produce the thiazole phosphate moiety of thiamine. Sulfur is provided by the thiocarboxylate moiety of the carrier protein ThiS. In vitro, sulfur can be provided by H(2)S. The chain is Thiazole synthase from Geobacter metallireducens (strain ATCC 53774 / DSM 7210 / GS-15).